The following is a 173-amino-acid chain: Large ribosomal subunit protein bL9 (173 aa).

It belongs to the bacterial ribosomal protein bL9 family.

In terms of biological role, binds to the 23S rRNA. This chain is Large ribosomal subunit protein bL9, found in Rickettsia bellii (strain RML369-C).